The chain runs to 190 residues: uncharacterized protein (190 aa).

Over 1-55 the chain is Cytoplasmic; it reads MSRLRRFNRKILSLSSDYTHDGESDQEDVSILPLDTEEQEELIQKFETNAHITNK. Residues 56–76 traverse the membrane as a helical segment; the sequence is LYINLLSILYLLYGGLLMILV. The Extracellular portion of the chain corresponds to 77 to 80; sequence RKSR. The chain crosses the membrane as a helical span at residues 81-101; the sequence is GYIKLALLAGANSLICSCITL. Topologically, residues 102-123 are cytoplasmic; that stretch reads RYDIVNDYLLFKKFKLRVSNFS. The helical transmembrane segment at 124–144 threads the bilayer; it reads INIINIILLVLMAWISFNHVV. Topologically, residues 145 to 149 are extracellular; sequence EDKKT. A helical transmembrane segment spans residues 150–170; it reads VLCLQVPMFLFWVAVLVKRWA. Residues 171 to 190 lie on the Cytoplasmic side of the membrane; sequence RNIEDEIADLRCLKYKYKNA.

Its subcellular location is the membrane. This is an uncharacterized protein from Saccharomyces cerevisiae (strain ATCC 204508 / S288c) (Baker's yeast).